The primary structure comprises 112 residues: Small ribosomal subunit protein bS6 (112 aa).

Belongs to the bacterial ribosomal protein bS6 family.

Functionally, binds together with bS18 to 16S ribosomal RNA. The protein is Small ribosomal subunit protein bS6 of Chlamydia caviae (strain ATCC VR-813 / DSM 19441 / 03DC25 / GPIC) (Chlamydophila caviae).